Consider the following 204-residue polypeptide: Paraneoplastic antigen-like protein 8C (204 aa).

A disordered region spans residues 135-204; the sequence is PPATGPRELP…RRHHASDKKL (70 aa). Basic residues predominate over residues 182 to 204; it reads VGKRGKRKNKKNRRRHHASDKKL.

It belongs to the PNMA family.

In Homo sapiens (Human), this protein is Paraneoplastic antigen-like protein 8C.